The following is a 224-amino-acid chain: Orotate phosphoribosyltransferase (224 aa).

5-phospho-alpha-D-ribose 1-diphosphate-binding positions include lysine 26, 73-74 (YK), arginine 100, lysine 101, lysine 104, histidine 106, and 127-135 (EDVTTAGTS). Orotate is bound by residues threonine 131 and arginine 160.

It belongs to the purine/pyrimidine phosphoribosyltransferase family. PyrE subfamily. As to quaternary structure, homodimer. Mg(2+) is required as a cofactor.

The catalysed reaction is orotidine 5'-phosphate + diphosphate = orotate + 5-phospho-alpha-D-ribose 1-diphosphate. The protein operates within pyrimidine metabolism; UMP biosynthesis via de novo pathway; UMP from orotate: step 1/2. Its function is as follows. Catalyzes the transfer of a ribosyl phosphate group from 5-phosphoribose 1-diphosphate to orotate, leading to the formation of orotidine monophosphate (OMP). This Clostridium acetobutylicum (strain ATCC 824 / DSM 792 / JCM 1419 / IAM 19013 / LMG 5710 / NBRC 13948 / NRRL B-527 / VKM B-1787 / 2291 / W) protein is Orotate phosphoribosyltransferase.